We begin with the raw amino-acid sequence, 103 residues long: Small ribosomal subunit protein uS10 (103 aa).

It belongs to the universal ribosomal protein uS10 family. In terms of assembly, part of the 30S ribosomal subunit.

Its function is as follows. Involved in the binding of tRNA to the ribosomes. The chain is Small ribosomal subunit protein uS10 from Acinetobacter baylyi (strain ATCC 33305 / BD413 / ADP1).